We begin with the raw amino-acid sequence, 688 residues long: MSGPNRTYSFGEGDDGLAHPSSRTHAMHSQYDDVSPISDGARMNPMNGQGMDHGLASVLEDGRQGWGRSPEPSPSLLTGSSATPGMDNLGPGAVGGGISGIALSVANSHDRLSGVEALMGTDGQEANIPAERGLSTTGSDNPYVPEPPEYRYSYGSNIALGAAAAPAGQLTPGQSVSHLSSTNPSQRNLYDIPYQDVGGLNAGPYQRHSAYSSNDLPVDINPDEIVDDGDDGFVPAPNSGSGARKSQAIPAAAGGAAAGGVLGNLGGLFGGKSAADTSYGPVPGAGLEAGEKGRWVKPKPGGGNKKRGWIVGAILAFIIIGAIVGGAVGGTIGHRGNEEPSSASSASSSSTQTATEDTSVNGDLDKNSAEIKALMNNKNLHKVFPGIDYTPWGVQYPLCLKYPPSQNNVTRDMAVLTQLTNNVRLYGTDCNQTEMVLHAIDKLEIKDMKIWLGVWIDSNETTSRRQIDQLYKIIDDAKDISIFNGAIVGNEALYRAGSDKTSAQTTLINYMQEVKDHFKKKNIDLPVATSDLGDNWDATLVQAADVVMANVHPFFGGIPVDQAAAWTWRFWQDHNVALTKGTNKKQIISEVGWPSGGGNDCGQGANCPNDTAGAVAGVDELNKFMEDWVCQALDNGTDYFWFEAFDEPWKIVYNTGKENWEDKWGLMDSARNLKPGLKIPDCGGKTAT.

3 disordered regions span residues 1 to 49, 61 to 91, and 169 to 194; these read MSGP…MNGQ, DGRQ…NLGP, and QLTP…DIPY. Topologically, residues 1–307 are cytoplasmic; the sequence is MSGPNRTYSF…PKPGGGNKKR (307 aa). Over residues 175–188 the composition is skewed to polar residues; it reads SVSHLSSTNPSQRN. Residues 308 to 328 form a helical; Signal-anchor for type II membrane protein membrane-spanning segment; the sequence is GWIVGAILAFIIIGAIVGGAV. The Extracellular portion of the chain corresponds to 329–688; it reads GGTIGHRGNE…IPDCGGKTAT (360 aa). Positions 334 to 363 are disordered; the sequence is HRGNEEPSSASSASSSSTQTATEDTSVNGD. The segment covering 341-355 has biased composition (low complexity); the sequence is SSASSASSSSTQTAT. N-linked (GlcNAc...) asparagine glycans are attached at residues asparagine 408, asparagine 431, and asparagine 459. The active-site Proton donor is the glutamate 491. The Nucleophile role is filled by glutamate 590. N-linked (GlcNAc...) asparagine glycosylation is found at asparagine 609 and asparagine 635.

The protein belongs to the glycosyl hydrolase 17 family.

The protein resides in the cell membrane. The catalysed reaction is Hydrolysis of (1-&gt;3)-beta-D-glucosidic linkages in (1-&gt;3)-beta-D-glucans.. Its function is as follows. Glucanases play a role in cell expansion during growth, in cell-cell fusion during mating, and in spore release during sporulation. This enzyme may be involved in beta-glucan degradation. Active on laminarin and lichenan. The chain is Probable glucan endo-1,3-beta-glucosidase btgC (btgC) from Aspergillus fumigatus (strain CBS 144.89 / FGSC A1163 / CEA10) (Neosartorya fumigata).